We begin with the raw amino-acid sequence, 164 residues long: Photosystem II extrinsic protein V (164 aa).

Positions Met-1–Ala-27 are cleaved as a signal peptide. Residues Cys-64, Cys-67, His-68, and Met-131 each coordinate heme c.

It belongs to the cytochrome c family. PsbV subfamily. PSII is composed of 1 copy each of membrane proteins PsbA, PsbB, PsbC, PsbD, PsbE, PsbF, PsbH, PsbI, PsbJ, PsbK, PsbL, PsbM, PsbT, PsbY, PsbZ, Psb30/Ycf12, at least 3 peripheral proteins of the oxygen-evolving complex and a large number of cofactors. It forms dimeric complexes. The extrinsic subunits in red algae are PsbO (OEC33), PsbQ', cytochrome c-550 and PsbU. Heme c is required as a cofactor.

It localises to the plastid. Its subcellular location is the chloroplast thylakoid membrane. Its function is as follows. One of the extrinsic, lumenal subunits of photosystem II (PSII). PSII is a light-driven water plastoquinone oxidoreductase, using light energy to abstract electrons from H(2)O, generating a proton gradient subsequently used for ATP formation. The extrinsic proteins stabilize the structure of photosystem II oxygen-evolving complex (OEC), the ion environment of oxygen evolution and protect the OEC against heat-induced inactivation. In Gracilaria tenuistipitata var. liui (Red alga), this protein is Photosystem II extrinsic protein V.